Here is a 273-residue protein sequence, read N- to C-terminus: Putative phosphoenolpyruvate synthase regulatory protein (273 aa).

153–160 (AVSRAGKT) lines the ADP pocket.

Belongs to the pyruvate, phosphate/water dikinase regulatory protein family. PSRP subfamily.

The enzyme catalyses [pyruvate, water dikinase] + ADP = [pyruvate, water dikinase]-phosphate + AMP + H(+). The catalysed reaction is [pyruvate, water dikinase]-phosphate + phosphate + H(+) = [pyruvate, water dikinase] + diphosphate. Functionally, bifunctional serine/threonine kinase and phosphorylase involved in the regulation of the phosphoenolpyruvate synthase (PEPS) by catalyzing its phosphorylation/dephosphorylation. The chain is Putative phosphoenolpyruvate synthase regulatory protein from Xylella fastidiosa (strain M12).